Reading from the N-terminus, the 284-residue chain is Circadian clock oscillator protein KaiA (284 aa).

The segment at 1–135 is psR domain, binds oxidized quinones; sequence MLSQIAICIW…LRLAPVETMA (135 aa). One can recognise a KaiA N-terminal domain in the interval 1–164; sequence MLSQIAICIW…DLAQRLQERL (164 aa). Positions 165 to 173 are flexible linker; it reads GYLGVYYKR. Residues 174-282 form the KaiA C-terminal domain; the sequence is DPDRFLRNLP…CEMYRRSIPR (109 aa).

The protein belongs to the KaiA family. As to quaternary structure, homodimer. The KaiABC complex composition changes during the circadian cycle to control KaiC phosphorylation. Complexes KaiC(6), KaiA(2-4):KaiC(6), KaiB(6):KaiC(6) and KaiC(6):KaiB(6):KaiA(12) are among the most important forms, many form cooperatively. The KaiA:KaiB complex is only found at 20-24 hours in the circadian cycle (subjective night). Binds to the C-terminal A-loop of KaiC via a coiled-coil structure. KaiA and CikA compete for binding to KaiB(fs). CikA copurifies with this protein in the clock complex. Interacts with LdpA.

Binding of oxidized quinones (produced as darkness falls) prevents KaiA from stimulating KaiC autophosphorylation. Its function is as follows. Key component of the KaiABC oscillator complex, which constitutes the main circadian regulator in cyanobacteria. Complex composition changes during the circadian cycle to control KaiC phosphorylation. KaiA stimulates KaiC autophosphorylation, while KaiB sequesters KaiA, leading to KaiC autodephosphorylation. KaiA binding to the KaiC CII domain during the subjective day yields KaiA(2-4):KaiC(6) complexes which stimulate KaiC autophosphorylation. A KaiA dimer is sufficient to enhance KaiC hexamer phosphorylation. Phospho-Ser-431 KaiC accumulation triggers binding of KaiB during the subjective night to form the KaiB(6):KaiC(6) complex, leading to changes in the output regulators CikA and SasA. KaiB(6):KaiC(6) formation exposes a site for KaiA binding on KaiB that sequesters KaiA from KaiC's CII domain, making the KaiC(6):KaiB(6):KaiA(12) complex resulting in KaiC autodephosphorylation. Complete dephosphorylation of KaiC leads to dissociation of KaiA(2):KaiB(1), completing 1 cycle of the Kai oscillator. Functionally, circadian oscillations can be generated in vitro by incubating KaiA, KaiB and KaiC with 1 mM ATP. The cycle is self-sustainable for at least 3 cycles and resistant to temperature changes. A very robust clock is reconstituted with KaiA, KaiB, KaiC, SasA, CikA and RpaA; output is measured by transcription from an appropriate reporter. In terms of biological role, kaiA binds oxidized quinones via its N-terminal PsR domain and is able to sense redox signals directly; quinone analog DBMIB (2,5-dibromo-3-methyl-6-isopropyl-p-benzoquinone) blocks KaiA stimulation of KaiC phosphorylation. The homodimer binds up to 8 quinones in the crystal structure, 3 in the PsR domain and 1 via the C-terminal helical bundle. Binding of oxidized quinone to the KaiA C-terminal domain reduces the phosphorylation of KaiC slightly; quinones may interact in a complex manner with KaiA to mediate clock input. In Synechococcus elongatus (strain ATCC 33912 / PCC 7942 / FACHB-805) (Anacystis nidulans R2), this protein is Circadian clock oscillator protein KaiA.